Reading from the N-terminus, the 224-residue chain is Heme response regulator HssR (224 aa).

Residues 3 to 116 (QCLVVDDDPR…ELIFRIRAVL (114 aa)) form the Response regulatory domain. Asp52 bears the 4-aspartylphosphate mark. Positions 124 to 222 (NSEMTIGNLT…VRGQGYKVEN (99 aa)) form a DNA-binding region, ompR/PhoB-type.

Post-translationally, phosphorylated by HssS.

It is found in the cytoplasm. Its function is as follows. Member of the two-component regulatory system HssS/HssR involved in intracellular heme homeostasis and tempering of staphylococcal virulence. Phosphorylated HssR binds to a direct repeat sequence within hrtAB promoter and activates the expression of hrtAB, an efflux pump, in response to extracellular heme, hemin, hemoglobin or blood. The protein is Heme response regulator HssR (hssR) of Staphylococcus aureus (strain Mu50 / ATCC 700699).